Here is a 147-residue protein sequence, read N- to C-terminus: Phosphoribosyl-AMP cyclohydrolase 2 (147 aa).

Aspartate 99 lines the Mg(2+) pocket. Cysteine 100 contacts Zn(2+). Mg(2+)-binding residues include aspartate 101 and aspartate 103. Residues cysteine 116 and cysteine 123 each coordinate Zn(2+).

The protein belongs to the PRA-CH family. As to quaternary structure, homodimer. Mg(2+) is required as a cofactor. The cofactor is Zn(2+).

The protein resides in the cytoplasm. It catalyses the reaction 1-(5-phospho-beta-D-ribosyl)-5'-AMP + H2O = 1-(5-phospho-beta-D-ribosyl)-5-[(5-phospho-beta-D-ribosylamino)methylideneamino]imidazole-4-carboxamide. The protein operates within amino-acid biosynthesis; L-histidine biosynthesis; L-histidine from 5-phospho-alpha-D-ribose 1-diphosphate: step 3/9. In terms of biological role, catalyzes the hydrolysis of the adenine ring of phosphoribosyl-AMP. This chain is Phosphoribosyl-AMP cyclohydrolase 2, found in Pseudomonas fluorescens (strain ATCC BAA-477 / NRRL B-23932 / Pf-5).